The chain runs to 489 residues: MVAWNGTLVRPKLLIGASCQCVYNIYLHPLRHYPGPKLAAATGLYHWYWTLAGRIHRQLHKLHRQHGEVVRIGPDRLSFIAPEAWKDIYGPGTTSHKENKKDGRFYAPTPNGRRAMISLLDNQHHASVRRVFQPAFSDRSLRALEPVINKHVKRLMHTNLRQLARADEPFDLVHLLNCAIFDIMGDLMLSESFGMLEQSAYVEWIETLLVALRYESVGQFLLEYATLGKLLSFLMPPSARRKREQHVQYTAQRVDKRQQKSEATKRDIWGFLAAHENAEMLDIEDKHANASLFMVAGTETTITALSGLVFLLLQHPPCMRRLVAEIRDSFTCEDAINMDTLQGLSYLNACLSEALRLYPPVPLGNPRVTPADGNVICGHAVPGHTRVYVSTWAACRSASNFGDADSFMPERWLPDSGYDSDRKEASKPFSYGPRNCIGKSMAYHNIRIIIARILWNYDLLAAAESDGWMKQECFPLWDKKPLMVRVMLR.

The chain crosses the membrane as a helical span at residues 292-312 (LFMVAGTETTITALSGLVFLL). Position 436 (cysteine 436) interacts with heme.

It belongs to the cytochrome P450 family. Heme serves as cofactor.

The protein resides in the membrane. The protein operates within mycotoxin biosynthesis. Functionally, cytochrome P450 monooxygenase; part of the gene clusters that mediate the biosynthesis of AM-toxins, host-selective toxins (HSTs) causing Alternaria blotch on apple, a worldwide distributed disease. AM-toxins are cyclic depsipeptides containing the 3 residues 2-hydroxy-isovaleric acid (2-HIV), dehydroalanine, L-alanine which are common for all 3 AM-toxins I to III. The fourth precursor is L-alpha-amino-methoxyphenyl-valeric acid (L-Amv) for AM-toxin I, L-alpha-amino-phenyl-valeric acid (L-Apv) for AM-toxin II, and L-alpha-amino-hydroxyphenyl-valeric acid (L-Ahv) for AM-toxin III. AM-toxins have two target sites for affecting susceptible apple cells; they cause invagination of the plasma membrane and electrolyte loss and chloroplast disorganization. The non-ribosomal peptide synthetase AMT1 contains 4 catalytic modules and is responsible for activation of each residue in AM-toxin. The aldo-keto reductase AMT2 catalyzes the conversion of 2-keto-isovaleric acid (2-KIV) to 2-hydroxy-isovaleric acid (2-HIV), one of the precursor residues incorporated by AMT1 during AM-toxin biosynthesis, by reduction of its ketone to an alcohol. The cytochrome P450 monooxygenase AMT3 and the thioesterase AMT4 are also important for AM-toxin production, but their exact function within the AM-toxin biosynthesis are not known yet. Up to 21 proteins (including AMT1 to AMT4) are predicted to be involved in AM-toxin biosynthesis since their expression ishighly up-regulated in AM-toxin-producing cultures. This is Cytochrome P450 monooxygenase AMT3 from Alternaria alternata (Alternaria rot fungus).